A 739-amino-acid polypeptide reads, in one-letter code: Phosphoribosylformylglycinamidine synthase subunit PurL (739 aa).

The active site involves histidine 54. ATP contacts are provided by tyrosine 57 and lysine 96. Glutamate 98 is a binding site for Mg(2+). Substrate is bound by residues 99-102 (SHNH) and arginine 121. Catalysis depends on histidine 100, which acts as the Proton acceptor. Aspartate 122 is a Mg(2+) binding site. Glutamine 245 contacts substrate. Residue aspartate 273 coordinates Mg(2+). 317-319 (ESQ) provides a ligand contact to substrate. ATP-binding residues include aspartate 500 and glycine 537. A Mg(2+)-binding site is contributed by asparagine 538. Serine 540 is a binding site for substrate.

Belongs to the FGAMS family. Monomer. Part of the FGAM synthase complex composed of 1 PurL, 1 PurQ and 2 PurS subunits.

The protein localises to the cytoplasm. It catalyses the reaction N(2)-formyl-N(1)-(5-phospho-beta-D-ribosyl)glycinamide + L-glutamine + ATP + H2O = 2-formamido-N(1)-(5-O-phospho-beta-D-ribosyl)acetamidine + L-glutamate + ADP + phosphate + H(+). It participates in purine metabolism; IMP biosynthesis via de novo pathway; 5-amino-1-(5-phospho-D-ribosyl)imidazole from N(2)-formyl-N(1)-(5-phospho-D-ribosyl)glycinamide: step 1/2. Its function is as follows. Part of the phosphoribosylformylglycinamidine synthase complex involved in the purines biosynthetic pathway. Catalyzes the ATP-dependent conversion of formylglycinamide ribonucleotide (FGAR) and glutamine to yield formylglycinamidine ribonucleotide (FGAM) and glutamate. The FGAM synthase complex is composed of three subunits. PurQ produces an ammonia molecule by converting glutamine to glutamate. PurL transfers the ammonia molecule to FGAR to form FGAM in an ATP-dependent manner. PurS interacts with PurQ and PurL and is thought to assist in the transfer of the ammonia molecule from PurQ to PurL. This Bacillus cereus (strain AH187) protein is Phosphoribosylformylglycinamidine synthase subunit PurL.